Here is a 1138-residue protein sequence, read N- to C-terminus: Phosphatidylserine decarboxylase proenzyme 2 (1138 aa).

Residues 1–122 enclose the C2 1 domain; it reads MRIIKGRKRG…SNSGLSSHSH (122 aa). 3 disordered regions span residues 90 to 166, 269 to 305, and 413 to 448; these read TGAP…PGST, MRSSSSLPPPLEDMLSNSSAVSGNEIRREKPYSDTDL, and AVSENDITSVDDEESENQQESDEEFDIYNEDEREDS. Positions 98 to 121 are enriched in low complexity; the sequence is SRPRTTTANTSSSTLSNSGLSSHS. Over residues 125 to 135 the composition is skewed to polar residues; the sequence is RNLNVTSKGNQ. The span at 136-166 shows a compositional bias: low complexity; it reads TSTSINSVSSSATPAPSHSSSSLSTTGPGST. Residues 293–305 are compositionally biased toward basic and acidic residues; the sequence is EIRREKPYSDTDL. The segment covering 421-448 has biased composition (acidic residues); the sequence is SVDDEESENQQESDEEFDIYNEDEREDS. The 123-residue stretch at 478-600 folds into the C2 2 domain; sequence RRAKSNFFIS…QQQQHENEWI (123 aa). Asp571, Ser574, and Asp577 together coordinate Ca(2+). Catalysis depends on charge relay system; for autoendoproteolytic cleavage activity residues Asp899, His956, and Ser1043. The active-site Schiff-base intermediate with substrate; via pyruvic acid; for decarboxylase activity is the Ser1043. The residue at position 1043 (Ser1043) is a Pyruvic acid (Ser); by autocatalysis.

Belongs to the phosphatidylserine decarboxylase family. PSD-B subfamily. Eukaryotic type II sub-subfamily. In terms of assembly, heterodimer of a large membrane-associated beta subunit and a small pyruvoyl-containing alpha subunit. Interacts with pstB2/PDR17. This interaction may be a means to structurally tether the donor membrane (ER) harboring PstB2/PDR17 to acceptor membranes (Golgi/endosomes) harboring PSD2 during PtdSer transport to the site of PtdEtn synthesis. Pyruvate is required as a cofactor. The cofactor is Ca(2+). Is synthesized initially as an inactive proenzyme. Formation of the active enzyme involves a self-maturation process in which the active site pyruvoyl group is generated from an internal serine residue via an autocatalytic post-translational modification. Two non-identical subunits are generated from the proenzyme in this reaction, and the pyruvate is formed at the N-terminus of the alpha chain, which is derived from the carboxyl end of the proenzyme. The autoendoproteolytic cleavage occurs by a canonical serine protease mechanism, in which the side chain hydroxyl group of the serine supplies its oxygen atom to form the C-terminus of the beta chain, while the remainder of the serine residue undergoes an oxidative deamination to produce ammonia and the pyruvoyl prosthetic group on the alpha chain. During this reaction, the Ser that is part of the protease active site of the proenzyme becomes the pyruvoyl prosthetic group, which constitutes an essential element of the active site of the mature decarboxylase.

It localises to the golgi apparatus membrane. It is found in the endosome membrane. It carries out the reaction a 1,2-diacyl-sn-glycero-3-phospho-L-serine + H(+) = a 1,2-diacyl-sn-glycero-3-phosphoethanolamine + CO2. It functions in the pathway phospholipid metabolism; phosphatidylethanolamine biosynthesis; phosphatidylethanolamine from CDP-diacylglycerol: step 2/2. Functionally, catalyzes the formation of phosphatidylethanolamine (PtdEtn) from phosphatidylserine (PtdSer). Plays a central role in phospholipid metabolism and in the interorganelle trafficking of phosphatidylserine. Phosphatidylethanolamine produced by PSD2 is insufficient to completely provide the PtdEtn pool required by mitochondria under respiratory conditions. PSD2 is also involved in the PtdSer transport step to the site of PtdEtn synthesis on the Golgi/endosome membranes. Required for normal heavy metal resistance. The polypeptide is Phosphatidylserine decarboxylase proenzyme 2 (Saccharomyces cerevisiae (strain ATCC 204508 / S288c) (Baker's yeast)).